A 1368-amino-acid polypeptide reads, in one-letter code: DNA-directed RNA polymerase subunit beta (1368 aa).

This sequence belongs to the RNA polymerase beta chain family. The RNAP catalytic core consists of 2 alpha, 1 beta, 1 beta' and 1 omega subunit. When a sigma factor is associated with the core the holoenzyme is formed, which can initiate transcription.

The enzyme catalyses RNA(n) + a ribonucleoside 5'-triphosphate = RNA(n+1) + diphosphate. In terms of biological role, DNA-dependent RNA polymerase catalyzes the transcription of DNA into RNA using the four ribonucleoside triphosphates as substrates. This chain is DNA-directed RNA polymerase subunit beta, found in Legionella pneumophila (strain Corby).